The primary structure comprises 439 residues: Adenylosuccinate synthetase (439 aa).

GTP contacts are provided by residues 14-20 (GDEGKGK) and 42-44 (GHT). Aspartate 15 functions as the Proton acceptor in the catalytic mechanism. 2 residues coordinate Mg(2+): aspartate 15 and glycine 42. IMP contacts are provided by residues 15–18 (DEGK), 40–43 (NAGH), threonine 130, arginine 144, glutamine 225, threonine 240, and arginine 304. Catalysis depends on histidine 43, which acts as the Proton donor. 300–306 (TTTGRRR) provides a ligand contact to substrate. GTP-binding positions include arginine 306, 332-334 (KLD), and 414-416 (SLG).

This sequence belongs to the adenylosuccinate synthetase family. Homodimer. Mg(2+) is required as a cofactor.

The protein localises to the cytoplasm. The catalysed reaction is IMP + L-aspartate + GTP = N(6)-(1,2-dicarboxyethyl)-AMP + GDP + phosphate + 2 H(+). It participates in purine metabolism; AMP biosynthesis via de novo pathway; AMP from IMP: step 1/2. Its function is as follows. Plays an important role in the de novo pathway of purine nucleotide biosynthesis. Catalyzes the first committed step in the biosynthesis of AMP from IMP. This chain is Adenylosuccinate synthetase, found in Synechococcus sp. (strain CC9902).